A 1043-amino-acid chain; its full sequence is Probable inorganic carbon transporter subunit DabA (1043 aa).

Positions 460, 462, 719, and 734 each coordinate Zn(2+).

This sequence belongs to the inorganic carbon transporter (TC 9.A.2) DabA family. Forms a complex with DabB. Zn(2+) is required as a cofactor.

The protein resides in the cell inner membrane. Functionally, part of an energy-coupled inorganic carbon pump. This chain is Probable inorganic carbon transporter subunit DabA, found in Thiobacillus denitrificans (strain ATCC 25259 / T1).